Consider the following 371-residue polypeptide: 4-hydroxy-3-methylbut-2-en-1-yl diphosphate synthase (flavodoxin) (371 aa).

Positions 268, 271, 303, and 310 each coordinate [4Fe-4S] cluster.

This sequence belongs to the IspG family. [4Fe-4S] cluster is required as a cofactor.

The catalysed reaction is (2E)-4-hydroxy-3-methylbut-2-enyl diphosphate + oxidized [flavodoxin] + H2O + 2 H(+) = 2-C-methyl-D-erythritol 2,4-cyclic diphosphate + reduced [flavodoxin]. It participates in isoprenoid biosynthesis; isopentenyl diphosphate biosynthesis via DXP pathway; isopentenyl diphosphate from 1-deoxy-D-xylulose 5-phosphate: step 5/6. Functionally, converts 2C-methyl-D-erythritol 2,4-cyclodiphosphate (ME-2,4cPP) into 1-hydroxy-2-methyl-2-(E)-butenyl 4-diphosphate. The sequence is that of 4-hydroxy-3-methylbut-2-en-1-yl diphosphate synthase (flavodoxin) from Lysinibacillus sphaericus (strain C3-41).